Consider the following 236-residue polypeptide: uncharacterized protein (236 aa).

The chain crosses the membrane as a helical span at residues 15–34 (GGMAHIISEAVIAGSIGLYF). Residues 36–71 (KKISALEQTVQELQSQLEVQNNQLQWLIQQQTRRLA) are a coiled coil. Disordered stretches follow at residues 83-113 (SPLP…FQFK) and 185-236 (ATTQ…IDCE). Polar residues-rich tracts occupy residues 93–102 (QQSTTTNAAG) and 185–195 (ATTQVSTFSKP). Residues 225-236 (ALDKILNDIDCE) are compositionally biased toward basic and acidic residues.

Its subcellular location is the membrane. This is an uncharacterized protein from Aedes vexans (Inland floodwater mosquito).